Here is a 145-residue protein sequence, read N- to C-terminus: D-aminoacyl-tRNA deacylase (145 aa).

A Gly-cisPro motif, important for rejection of L-amino acids motif is present at residues 137–138 (GP).

This sequence belongs to the DTD family. Homodimer.

Its subcellular location is the cytoplasm. It carries out the reaction glycyl-tRNA(Ala) + H2O = tRNA(Ala) + glycine + H(+). The catalysed reaction is a D-aminoacyl-tRNA + H2O = a tRNA + a D-alpha-amino acid + H(+). Functionally, an aminoacyl-tRNA editing enzyme that deacylates mischarged D-aminoacyl-tRNAs. Also deacylates mischarged glycyl-tRNA(Ala), protecting cells against glycine mischarging by AlaRS. Acts via tRNA-based rather than protein-based catalysis; rejects L-amino acids rather than detecting D-amino acids in the active site. By recycling D-aminoacyl-tRNA to D-amino acids and free tRNA molecules, this enzyme counteracts the toxicity associated with the formation of D-aminoacyl-tRNA entities in vivo and helps enforce protein L-homochirality. In Pseudomonas paraeruginosa (strain DSM 24068 / PA7) (Pseudomonas aeruginosa (strain PA7)), this protein is D-aminoacyl-tRNA deacylase.